The primary structure comprises 1362 residues: MAYSYTEKKRIRKNFGKLPSVMDAPYLLSIQVDSYRTFLQDGKSPKNREDIGLQAAFRSVFPIESYSGNAALEFVEYGLGKPEFDVRECILRGSTYAAPMRVKIRLIIKDRETKSIKDVREQEVYMGEIPLMTENGTFVINGTERVIVSQLHRSPGVFFDHDKGKTHSSGKVLYSARIIPYRGSWLDFEFDAKDLVYVRIDRRRKLLASVILRALGYNNAQILDLFYEKVPVYLDFGSYQIDLVPERLRGEMAQFDIADNDGKVIVEQGKRINARHVRQMEASGLTKLSVPDEYLYERITAEDITLRDGDVIAANTLLSHEIMVKLAEGGVKQFNILYTNDIDHGSFVADTLRADTTMGREDALVEIYKVMRPGEPPTKEAAENLFNNLFFSSERYDLSPVGRMKFNRRLGRPYEVGTDQKSREVEGILSNEDIIDVLRTLVEIRNGKGEVDDIDHLGNRRVRSVGEMTENQFRVGLVRVERAVKERLSQAETDNLSPQDLINAKPVAAAIKEFFGSSQLSQFMDQNNPLSEITHKRRVSALGPGGLTRERAGFEVRDVHQTHYGRVCPIETPEGPNIGLINSLSVYAKANDFGFLETPYRKVVDGRVSDDVEYLSAIEEVGTVIAQADSAVDADGHLMEEMVSVRHQGEFVRMPPEKVTHMDVSAQQVVSVAASLIPFLEHDDANRALMGSNMQRQAVPTLLADKPLVGTGMEANVARDSGVCVIAKRGGMIEFVDASRVVIRVNEEEMIAGEAGVDIYNLIKYTRSNQNTCINQKVLVNLGDKVGRGDVLADGPSTDGGELALGQNMRVAFMTWNGYNYEDSILLSERVLQEDRLTSIHIQELSCVARDTKLGAEEITADIPNVGEAALSKLDESGIVYIGAEVTAGDILVGKVTPKGETQLTPEEKLLRAIFGEKAADVKDSSLRVPSGTKGTVIDVQVFTRDGLEKDDRALAIEKAQLDAYRKDLKEEYKIFEEAARERIVRLLNGQESNGGGTTKRGDKLSDDVLSGLELVDLLDIQPTDEGIAERLSQIQVFLKEKSAEIDEKFAEKKRKLATGDELTTGVLKVVKVYLAVKRRIQPGDKMAGRHGNKGVVSNILPVEDMPHDANGVPVDVVLNPLGVPSRMNVGQILETHLGLAAKGLGEQIDKMLQQQRTIAELRIFLDKIYNKVGGEQEELDTLTDEEILVLAGNLRKGVPLATPVFDGAEEGQIKELLELAELPRTGQQILFDGRTGEQFDRPVTVGYMYMLKLNHLVDDKMHARSTGSYSLVTQQPLGGKAQFGGQRFGEMEVWALEAYGAAYTLQEMLTVKSDDVEGRTRIYKNIVDGNHYMDPGMPESFNVLTKEIRSLGINIELKNGD.

Belongs to the RNA polymerase beta chain family. The RNAP catalytic core consists of 2 alpha, 1 beta, 1 beta' and 1 omega subunit. When a sigma factor is associated with the core the holoenzyme is formed, which can initiate transcription.

It catalyses the reaction RNA(n) + a ribonucleoside 5'-triphosphate = RNA(n+1) + diphosphate. Functionally, DNA-dependent RNA polymerase catalyzes the transcription of DNA into RNA using the four ribonucleoside triphosphates as substrates. This is DNA-directed RNA polymerase subunit beta from Acinetobacter baylyi (strain ATCC 33305 / BD413 / ADP1).